The sequence spans 388 residues: Pepsin A (388 aa).

An N-terminal signal peptide occupies residues 1–15; it reads MKWLLLLGLVALSEC. A propeptide spans 16-62 (activation peptide); it reads IIYKVPLVRKKSLRRNLSEHGLLKDFLKKHNRNPASKYFPQTEAPTL. The region spanning 76–385 is the Peptidase A1 domain; that stretch reads YFGTIGIGTP…DRANNQVGLA (310 aa). The active site involves Asp94. Residues Cys107 and Cys112 are joined by a disulfide bond. Ser130 carries the phosphoserine modification. The cysteines at positions 268 and 272 are disulfide-linked. Asp277 is an active-site residue. An intrachain disulfide couples Cys311 to Cys344.

It belongs to the peptidase A1 family.

It localises to the secreted. The catalysed reaction is Preferential cleavage: hydrophobic, preferably aromatic, residues in P1 and P1' positions. Cleaves 1-Phe-|-Val-2, 4-Gln-|-His-5, 13-Glu-|-Ala-14, 14-Ala-|-Leu-15, 15-Leu-|-Tyr-16, 16-Tyr-|-Leu-17, 23-Gly-|-Phe-24, 24-Phe-|-Phe-25 and 25-Phe-|-Tyr-26 bonds in the B chain of insulin.. In terms of biological role, shows particularly broad specificity; although bonds involving phenylalanine and leucine are preferred, many others are also cleaved to some extent. This Macaca mulatta (Rhesus macaque) protein is Pepsin A (PGA).